Reading from the N-terminus, the 88-residue chain is Large ribosomal subunit protein bL27 (88 aa).

The span at 1 to 13 (MATKKSGGSSSNG) shows a compositional bias: low complexity. The tract at residues 1 to 24 (MATKKSGGSSSNGRDSRGRRLGVK) is disordered.

It belongs to the bacterial ribosomal protein bL27 family.

The sequence is that of Large ribosomal subunit protein bL27 from Ehrlichia ruminantium (strain Gardel).